Here is a 440-residue protein sequence, read N- to C-terminus: Chromosomal replication initiator protein DnaA (440 aa).

The domain I, interacts with DnaA modulators stretch occupies residues 1 to 74; it reads MNPSQILENL…VQSGNKAIIN (74 aa). The segment at 74 to 99 is domain II; it reads NIQAQSAKQSNKSTKIDIAHIKAQST. The domain III, AAA+ region stretch occupies residues 100 to 316; it reads ILNPSFTFDS…GIIISLNAYA (217 aa). Residues Gly-146, Gly-148, Lys-149, and Thr-150 each contribute to the ATP site. The segment at 317–440 is domain IV, binds dsDNA; it reads TILGQEITLE…KNKILVKSQS (124 aa).

It belongs to the DnaA family. As to quaternary structure, oligomerizes as a right-handed, spiral filament on DNA at oriC.

The protein localises to the cytoplasm. In terms of biological role, plays an essential role in the initiation and regulation of chromosomal replication. ATP-DnaA binds to the origin of replication (oriC) to initiate formation of the DNA replication initiation complex once per cell cycle. Binds the DnaA box (a 9 base pair repeat at the origin) and separates the double-stranded (ds)DNA. Forms a right-handed helical filament on oriC DNA; dsDNA binds to the exterior of the filament while single-stranded (ss)DNA is stabiized in the filament's interior. The ATP-DnaA-oriC complex binds and stabilizes one strand of the AT-rich DNA unwinding element (DUE), permitting loading of DNA polymerase. After initiation quickly degrades to an ADP-DnaA complex that is not apt for DNA replication. Binds acidic phospholipids. This is Chromosomal replication initiator protein DnaA from Campylobacter jejuni (strain RM1221).